Here is a 367-residue protein sequence, read N- to C-terminus: tRNA pseudouridine synthase D (367 aa).

The active-site Nucleophile is Asp80. Positions 156–316 (GIPNWFGEQR…LKQERRALRL (161 aa)) constitute a TRUD domain.

The protein belongs to the pseudouridine synthase TruD family.

It catalyses the reaction uridine(13) in tRNA = pseudouridine(13) in tRNA. In terms of biological role, responsible for synthesis of pseudouridine from uracil-13 in transfer RNAs. This chain is tRNA pseudouridine synthase D, found in Xanthomonas campestris pv. campestris (strain 8004).